The following is a 76-amino-acid chain: Putative Fe(2+) transport protein A (76 aa).

It belongs to the FeoA family.

Might be involved in Fe(2+) ion uptake. In Helicobacter pylori (strain ATCC 700392 / 26695) (Campylobacter pylori), this protein is Putative Fe(2+) transport protein A.